A 648-amino-acid chain; its full sequence is Replication restart protein PriA (648 aa).

The Helicase ATP-binding domain maps to 131 to 297 (TILNESNKPT…KTHKYQLVTL (167 aa)). Residue 144-151 (GVTGSGKT) participates in ATP binding. A DEAH box motif is present at residues 240 to 243 (DEEH). Zn(2+) contacts are provided by Cys358, Cys361, Cys367, Cys370, Cys385, Cys388, Cys398, and Cys401. A Helicase C-terminal domain is found at 375-548 (VLHKATKKLE…RFFTNELEIR (174 aa)).

Belongs to the helicase family. PriA subfamily. As to quaternary structure, component of the replication restart primosome. The cofactor is Zn(2+).

The catalysed reaction is Couples ATP hydrolysis with the unwinding of duplex DNA by translocating in the 3'-5' direction.. It catalyses the reaction ATP + H2O = ADP + phosphate + H(+). Its function is as follows. Initiates the restart of stalled replication forks, which reloads the replicative helicase on sites other than the origin of replication. Recognizes and binds to abandoned replication forks and remodels them to uncover a helicase loading site. Promotes assembly of the primosome at these replication forks. The chain is Replication restart protein PriA from Rickettsia prowazekii (strain Madrid E).